The chain runs to 242 residues: Type III pantothenate kinase (242 aa).

An ATP-binding site is contributed by 7–14; the sequence is DLGNSRFK. Substrate contacts are provided by residues tyrosine 91 and 98 to 101; that span reads GVDR. Aspartate 100 functions as the Proton acceptor in the catalytic mechanism. An ATP-binding site is contributed by threonine 121. Threonine 171 contacts substrate.

The protein belongs to the type III pantothenate kinase family. As to quaternary structure, homodimer. NH4(+) is required as a cofactor. Requires K(+) as cofactor.

Its subcellular location is the cytoplasm. It carries out the reaction (R)-pantothenate + ATP = (R)-4'-phosphopantothenate + ADP + H(+). It participates in cofactor biosynthesis; coenzyme A biosynthesis; CoA from (R)-pantothenate: step 1/5. In terms of biological role, catalyzes the phosphorylation of pantothenate (Pan), the first step in CoA biosynthesis. This is Type III pantothenate kinase from Xanthomonas campestris pv. campestris (strain 8004).